The following is a 126-amino-acid chain: Aspartate 1-decarboxylase (126 aa).

The active-site Schiff-base intermediate with substrate; via pyruvic acid is the serine 25. Serine 25 carries the pyruvic acid (Ser) modification. Threonine 57 serves as a coordination point for substrate. Tyrosine 58 serves as the catalytic Proton donor. A substrate-binding site is contributed by 73–75 (GAA).

The protein belongs to the PanD family. As to quaternary structure, heterooctamer of four alpha and four beta subunits. The cofactor is pyruvate. Post-translationally, is synthesized initially as an inactive proenzyme, which is activated by self-cleavage at a specific serine bond to produce a beta-subunit with a hydroxyl group at its C-terminus and an alpha-subunit with a pyruvoyl group at its N-terminus.

The protein resides in the cytoplasm. It carries out the reaction L-aspartate + H(+) = beta-alanine + CO2. It functions in the pathway cofactor biosynthesis; (R)-pantothenate biosynthesis; beta-alanine from L-aspartate: step 1/1. In terms of biological role, catalyzes the pyruvoyl-dependent decarboxylation of aspartate to produce beta-alanine. The protein is Aspartate 1-decarboxylase of Chromohalobacter salexigens (strain ATCC BAA-138 / DSM 3043 / CIP 106854 / NCIMB 13768 / 1H11).